A 185-amino-acid chain; its full sequence is Elongation factor P (185 aa).

This sequence belongs to the elongation factor P family.

It is found in the cytoplasm. Its pathway is protein biosynthesis; polypeptide chain elongation. Involved in peptide bond synthesis. Stimulates efficient translation and peptide-bond synthesis on native or reconstituted 70S ribosomes in vitro. Probably functions indirectly by altering the affinity of the ribosome for aminoacyl-tRNA, thus increasing their reactivity as acceptors for peptidyl transferase. The sequence is that of Elongation factor P from Listeria innocua serovar 6a (strain ATCC BAA-680 / CLIP 11262).